A 337-amino-acid polypeptide reads, in one-letter code: Holliday junction branch migration complex subunit RuvB (337 aa).

The segment at 4–184 is large ATPase domain (RuvB-L); sequence ADRLIEPIAS…FGIVQRLEFY (181 aa). Residues isoleucine 23, arginine 24, glycine 65, lysine 68, threonine 69, threonine 70, 131 to 133, arginine 174, tyrosine 184, and arginine 221 each bind ATP; that span reads EDY. Mg(2+) is bound at residue threonine 69. Residues 185–255 form a small ATPAse domain (RuvB-S) region; that stretch reads NVADLSTIVS…TAAAALDMLE (71 aa). The interval 258-337 is head domain (RuvB-H); that stretch reads SEGFDIMDRK…FGITKDQTKD (80 aa). Positions 294, 313, and 318 each coordinate DNA.

It belongs to the RuvB family. As to quaternary structure, homohexamer. Forms an RuvA(8)-RuvB(12)-Holliday junction (HJ) complex. HJ DNA is sandwiched between 2 RuvA tetramers; dsDNA enters through RuvA and exits via RuvB. An RuvB hexamer assembles on each DNA strand where it exits the tetramer. Each RuvB hexamer is contacted by two RuvA subunits (via domain III) on 2 adjacent RuvB subunits; this complex drives branch migration. In the full resolvosome a probable DNA-RuvA(4)-RuvB(12)-RuvC(2) complex forms which resolves the HJ.

It localises to the cytoplasm. The catalysed reaction is ATP + H2O = ADP + phosphate + H(+). Its function is as follows. The RuvA-RuvB-RuvC complex processes Holliday junction (HJ) DNA during genetic recombination and DNA repair, while the RuvA-RuvB complex plays an important role in the rescue of blocked DNA replication forks via replication fork reversal (RFR). RuvA specifically binds to HJ cruciform DNA, conferring on it an open structure. The RuvB hexamer acts as an ATP-dependent pump, pulling dsDNA into and through the RuvAB complex. RuvB forms 2 homohexamers on either side of HJ DNA bound by 1 or 2 RuvA tetramers; 4 subunits per hexamer contact DNA at a time. Coordinated motions by a converter formed by DNA-disengaged RuvB subunits stimulates ATP hydrolysis and nucleotide exchange. Immobilization of the converter enables RuvB to convert the ATP-contained energy into a lever motion, pulling 2 nucleotides of DNA out of the RuvA tetramer per ATP hydrolyzed, thus driving DNA branch migration. The RuvB motors rotate together with the DNA substrate, which together with the progressing nucleotide cycle form the mechanistic basis for DNA recombination by continuous HJ branch migration. Branch migration allows RuvC to scan DNA until it finds its consensus sequence, where it cleaves and resolves cruciform DNA. This Colwellia psychrerythraea (strain 34H / ATCC BAA-681) (Vibrio psychroerythus) protein is Holliday junction branch migration complex subunit RuvB.